The sequence spans 300 residues: GTPase Era (300 aa).

An Era-type G domain is found at 6–173 (KSGFVAIVGR…MDVLVEQMPE (168 aa)). Residues 14–21 (GRPNVGKS) form a G1 region. 14 to 21 (GRPNVGKS) is a binding site for GTP. The G2 stretch occupies residues 40–44 (QTTRN). The G3 stretch occupies residues 61–64 (DTPG). GTP-binding positions include 61 to 65 (DTPGI) and 123 to 126 (NKID). The segment at 123-126 (NKID) is G4. Residues 152–154 (ISA) form a G5 region. In terms of domain architecture, KH type-2 spans 204-281 (TRDEIPHSVA…YLELWVKVQK (78 aa)).

This sequence belongs to the TRAFAC class TrmE-Era-EngA-EngB-Septin-like GTPase superfamily. Era GTPase family. In terms of assembly, monomer.

Its subcellular location is the cytoplasm. It localises to the cell membrane. An essential GTPase that binds both GDP and GTP, with rapid nucleotide exchange. Plays a role in 16S rRNA processing and 30S ribosomal subunit biogenesis and possibly also in cell cycle regulation and energy metabolism. The polypeptide is GTPase Era (Enterococcus faecalis (strain ATCC 700802 / V583)).